A 380-amino-acid chain; its full sequence is Tubulin-like protein CetZ (380 aa).

Residues 10 to 14 (QCGTK), 103 to 105 (GTG), Glu136, Asn163, and Asn181 each bind GTP. Residues 359-380 (PSLEATGSDDPEGFAEYREVSR) are disordered.

The protein belongs to the CetZ family.

Its subcellular location is the cytoplasm. In terms of biological role, involved in cell shape control. The sequence is that of Tubulin-like protein CetZ from Thermococcus kodakarensis (strain ATCC BAA-918 / JCM 12380 / KOD1) (Pyrococcus kodakaraensis (strain KOD1)).